Reading from the N-terminus, the 65-residue chain is Pancreatic polypeptide prohormone (65 aa).

Tyr36 bears the Tyrosine amide mark. Positions 59–65 are excised as a propeptide; that stretch reads ELSPMGA.

Belongs to the NPY family.

The protein localises to the secreted. In terms of biological role, hormone secreted by pancreatic cells that acts as a regulator of pancreatic and gastrointestinal functions probably by signaling through the G protein-coupled receptor NPY4R2. The protein is Pancreatic polypeptide prohormone (PPY) of Sus scrofa (Pig).